Here is a 456-residue protein sequence, read N- to C-terminus: Cobyrinate a,c-diamide synthase (456 aa).

The GATase cobBQ-type domain occupies 247 to 439 (PIAIARDRAF…LHLHFGGKPW (193 aa)). The Nucleophile role is filled by cysteine 330.

This sequence belongs to the CobB/CbiA family. Mg(2+) is required as a cofactor.

It catalyses the reaction cob(II)yrinate + 2 L-glutamine + 2 ATP + 2 H2O = cob(II)yrinate a,c diamide + 2 L-glutamate + 2 ADP + 2 phosphate + 2 H(+). Its pathway is cofactor biosynthesis; adenosylcobalamin biosynthesis; cob(II)yrinate a,c-diamide from sirohydrochlorin (anaerobic route): step 10/10. In terms of biological role, catalyzes the ATP-dependent amidation of the two carboxylate groups at positions a and c of cobyrinate, using either L-glutamine or ammonia as the nitrogen source. The polypeptide is Cobyrinate a,c-diamide synthase (Synechococcus sp. (strain ATCC 27144 / PCC 6301 / SAUG 1402/1) (Anacystis nidulans)).